A 274-amino-acid polypeptide reads, in one-letter code: 2,3,4,5-tetrahydropyridine-2,6-dicarboxylate N-succinyltransferase (274 aa).

Substrate contacts are provided by arginine 104 and aspartate 141.

It belongs to the transferase hexapeptide repeat family. As to quaternary structure, homotrimer.

The protein localises to the cytoplasm. It carries out the reaction (S)-2,3,4,5-tetrahydrodipicolinate + succinyl-CoA + H2O = (S)-2-succinylamino-6-oxoheptanedioate + CoA. The protein operates within amino-acid biosynthesis; L-lysine biosynthesis via DAP pathway; LL-2,6-diaminopimelate from (S)-tetrahydrodipicolinate (succinylase route): step 1/3. The chain is 2,3,4,5-tetrahydropyridine-2,6-dicarboxylate N-succinyltransferase from Shewanella amazonensis (strain ATCC BAA-1098 / SB2B).